The following is a 608-amino-acid chain: Actin-interacting protein 1 (608 aa).

11 WD repeats span residues 62–101, 106–149, 150–190, 193–232, 237–276, 323–362, 366–403, 444–483, 487–526, 531–570, and 575–607; these read EHSC…HLLK, PIAG…GEIS, GQSK…FKMT, DHSR…LVGE, AHKG…LVSE, GHNK…NDRI, GHGN…YTDY, PIKY…LEPK, DHLG…PAHN, FHSA…KHTI, and HPQS…HVEN.

The protein belongs to the WD repeat AIP1 family. In terms of tissue distribution, expressed in pupal wing cells.

Its subcellular location is the cytoplasm. The protein resides in the cytoskeleton. Its function is as follows. Induces disassembly of actin filaments in conjunction with ADF/cofilin family proteins. Together with GMF, promotes Arp2/3-nucleated actin filament array disassembly. Essential for organismal and cell viability. Required for the development of normal wing cell planar polarity. In egg chambers and together with GMF, plays an important role in directional migration of border cell clusters. This chain is Actin-interacting protein 1 (flr), found in Drosophila melanogaster (Fruit fly).